Reading from the N-terminus, the 111-residue chain is MSNPQDDKPIDQEQEAHVILKVKSQDGDEVLFKNKKSAPLKKLMYVYCDRRGLKLDAFAFIFNGARIGGLETPDELDMEDGDVIDACRAMSGGLRANQRQWSYMLFDHNGL.

One can recognise a Ubiquitin-like domain in the interval 16–93 (AHVILKVKSQ…IDACRAMSGG (78 aa)). A Glycyl lysine isopeptide (Gly-Lys) (interchain with K-? in acceptor proteins) cross-link involves residue glycine 93.

It belongs to the ubiquitin family. SUMO subfamily. In terms of assembly, interacts with SAE2, SCE1, SIZ1 and MMS21. Covalently attached to a number of proteins. Interacts with NPR1; this interaction promotes NPR1 phosphorylation and triggers its sumoylation and subsequent degradation.

The protein localises to the nucleus. It localises to the cytoplasm. Ubiquitin-like protein which can be covalently attached to target lysines as a monomer. Does not seem to be involved in protein degradation and may function as an antagonist of ubiquitin in the degradation process. Promotes NPR1 sumoylation to activate defense gene expression and regulate its degradation. This chain is Small ubiquitin-related modifier 3, found in Arabidopsis thaliana (Mouse-ear cress).